Here is a 349-residue protein sequence, read N- to C-terminus: tRNA pseudouridine synthase D (349 aa).

Residue F27 coordinates substrate. The active-site Nucleophile is the D80. A substrate-binding site is contributed by N129. Positions 155-303 (GVPNYFGAQR…VEASRRAMLL (149 aa)) constitute a TRUD domain. F329 is a substrate binding site.

It belongs to the pseudouridine synthase TruD family.

The catalysed reaction is uridine(13) in tRNA = pseudouridine(13) in tRNA. In terms of biological role, responsible for synthesis of pseudouridine from uracil-13 in transfer RNAs. The sequence is that of tRNA pseudouridine synthase D from Salmonella typhi.